A 184-amino-acid chain; its full sequence is dCTP deaminase (184 aa).

Residues Lys-107–Arg-112, Thr-131–Glu-133, Gln-152, Tyr-166, and Gln-176 each bind dCTP. Glu-133 (proton donor/acceptor) is an active-site residue.

It belongs to the dCTP deaminase family. Homotrimer.

The catalysed reaction is dCTP + H2O + H(+) = dUTP + NH4(+). The protein operates within pyrimidine metabolism; dUMP biosynthesis; dUMP from dCTP (dUTP route): step 1/2. Functionally, catalyzes the deamination of dCTP to dUTP. This is dCTP deaminase from Novosphingobium aromaticivorans (strain ATCC 700278 / DSM 12444 / CCUG 56034 / CIP 105152 / NBRC 16084 / F199).